A 476-amino-acid chain; its full sequence is Glycogen synthase (476 aa).

K15 is an ADP-alpha-D-glucose binding site.

This sequence belongs to the glycosyltransferase 1 family. Bacterial/plant glycogen synthase subfamily.

It carries out the reaction [(1-&gt;4)-alpha-D-glucosyl](n) + ADP-alpha-D-glucose = [(1-&gt;4)-alpha-D-glucosyl](n+1) + ADP + H(+). Its pathway is glycan biosynthesis; glycogen biosynthesis. Its function is as follows. Synthesizes alpha-1,4-glucan chains using ADP-glucose. The polypeptide is Glycogen synthase (Haemophilus influenzae (strain PittGG)).